We begin with the raw amino-acid sequence, 388 residues long: Galactokinase (388 aa).

Residue 33–36 participates in substrate binding; the sequence is EHTD. Residues Ser-67 and 124–130 each bind ATP; that span reads GAGLSSS. Mg(2+)-binding residues include Ser-130 and Glu-162. The active-site Proton acceptor is the Asp-174. Tyr-224 is a substrate binding site.

The protein belongs to the GHMP kinase family. GalK subfamily.

The protein localises to the cytoplasm. The catalysed reaction is alpha-D-galactose + ATP = alpha-D-galactose 1-phosphate + ADP + H(+). The protein operates within carbohydrate metabolism; galactose metabolism. In terms of biological role, catalyzes the transfer of the gamma-phosphate of ATP to D-galactose to form alpha-D-galactose-1-phosphate (Gal-1-P). This Lacticaseibacillus casei (strain BL23) (Lactobacillus casei) protein is Galactokinase.